A 316-amino-acid polypeptide reads, in one-letter code: NADH-cytochrome b5 reductase-like (316 aa).

An Oxidoreductase-like domain is found at 17-53 (KPVEPLPSQCCGSGCSPCVFDLYYRDLERWETARARN). The region spanning 76-178 (ETFLAFHIST…RGPFGSFLYE (103 aa)) is the FAD-binding FR-type domain. Residues 158–173 (ESWR…GPFG) and 183–215 (GELL…TFVT) each bind FAD.

Belongs to the flavoprotein pyridine nucleotide cytochrome reductase family. FAD serves as cofactor.

The enzyme catalyses 2 Fe(III)-[cytochrome b5] + NADH = 2 Fe(II)-[cytochrome b5] + NAD(+) + H(+). Its function is as follows. NADH-cytochrome b5 reductases are involved in desaturation and elongation of fatty acids, cholesterol biosynthesis, drug metabolism, and, in erythrocyte, methemoglobin reduction. In Mus musculus (Mouse), this protein is NADH-cytochrome b5 reductase-like (Cyb5rl).